The chain runs to 53 residues: UPF0391 membrane protein KPK_4780 (53 aa).

A run of 2 helical transmembrane segments spans residues 4-24 (WGII…GGLA) and 30-47 (AAKI…VSLF).

Belongs to the UPF0391 family.

It localises to the cell membrane. The protein is UPF0391 membrane protein KPK_4780 of Klebsiella pneumoniae (strain 342).